A 655-amino-acid chain; its full sequence is p-hydroxybenzoic acid efflux pump subunit AaeB (655 aa).

Topologically, residues 1–12 are periplasmic; it reads MGIFSIANQHIR. Residues 13–33 form a helical membrane-spanning segment; that stretch reads FAVKLATAIVLALFVGFHFQL. Residues 34–37 lie on the Cytoplasmic side of the membrane; that stretch reads ETPR. A helical membrane pass occupies residues 38–58; it reads WAVLTAAIVAAGPAFAAGGEP. At 59 to 68 the chain is on the periplasmic side; the sequence is YSGAIRYRGF. The chain crosses the membrane as a helical span at residues 69–89; the sequence is LRIIGTFIGCIAGLVIIIAMI. At 90–92 the chain is on the cytoplasmic side; it reads RAP. The helical transmembrane segment at 93-113 threads the bilayer; the sequence is LLMILVCCIWAGFCTWISSLV. Residues 114-120 lie on the Periplasmic side of the membrane; that stretch reads RIENSYA. Residues 121 to 141 form a helical membrane-spanning segment; that stretch reads WGLAGYTALIIVITIQPEPLL. Residues 142–151 lie on the Cytoplasmic side of the membrane; it reads TPQFAVERCS. The helical transmembrane segment at 152–172 threads the bilayer; that stretch reads EIVIGIVCAIMADLLFSPRSI. The Periplasmic portion of the chain corresponds to 173-369; it reads KQEVDRELES…RTTLSCILGT (197 aa). A helical transmembrane segment spans residues 370-390; that stretch reads LFWLWTGWTSGSGAMVMIAVV. The Cytoplasmic segment spans residues 391–406; sequence TSLAMRLPNPRMVAID. The helical transmembrane segment at 407–427 threads the bilayer; the sequence is FIYGTLAALPLGLLYFLVIIP. Topologically, residues 428–430 are periplasmic; it reads NTQ. A helical transmembrane segment spans residues 431–451; the sequence is QSMLLLCISLAVLGFFLGIEV. Residues 452-458 are Cytoplasmic-facing; that stretch reads QKRRLGS. The helical transmembrane segment at 459–479 threads the bilayer; the sequence is MGALASTINIIVLDNPMTFHF. Over 480–481 the chain is Periplasmic; the sequence is SQ. Residues 482–502 form a helical membrane-spanning segment; it reads FLDSALGQIVGCVLAFTVILL. Residues 503–655 are Cytoplasmic-facing; the sequence is VRDKSRDRTG…HKYQHALTDS (153 aa).

It belongs to the aromatic acid exporter ArAE (TC 2.A.85) family.

Its subcellular location is the cell inner membrane. Its function is as follows. Forms an efflux pump with AaeA. Could function as a metabolic relief valve, allowing to eliminate certain compounds when they accumulate to high levels in the cell. In Escherichia coli O6:H1 (strain CFT073 / ATCC 700928 / UPEC), this protein is p-hydroxybenzoic acid efflux pump subunit AaeB.